Here is a 493-residue protein sequence, read N- to C-terminus: EGF-containing fibulin-like extracellular matrix protein 1 (493 aa).

Residues 1–17 form the signal peptide; it reads MLQTVFLTMLTLALVKS. An EGF-like 1; atypical domain is found at 26–71; the sequence is YTQCTDGYEWDPVRQQCKDIDECDIVPDACKGGMKCVNHYGGYLCL. The region spanning 173–213 is the EGF-like 2; calcium-binding domain; it reads DIDECTSGTHNCRLDQVCINLRGSFTCHCLPGYQKRGEQCV. Disulfide bonds link Cys-177/Cys-190, Cys-184/Cys-199, Cys-201/Cys-212, Cys-218/Cys-228, Cys-224/Cys-237, Cys-239/Cys-252, Cys-258/Cys-268, Cys-264/Cys-277, Cys-279/Cys-292, Cys-298/Cys-309, Cys-305/Cys-318, Cys-320/Cys-332, Cys-338/Cys-350, Cys-344/Cys-359, and Cys-365/Cys-377. The EGF-like 3; calcium-binding domain maps to 214–253; sequence DIDECSVPPYCHQGCVNTPGSFYCQCNPGFQLAANNYTCV. N-linked (GlcNAc...) asparagine glycosylation is present at Asn-249. The region spanning 254-293 is the EGF-like 4; calcium-binding domain; it reads DINECDASNQCAQQCYNILGSFICQCNQGYELSSDRLNCE. Residues 259-493 are mediates interaction with TIMP3; that stretch reads DASNQCAQQC…LTIIVGPFSF (235 aa). An EGF-like 5; calcium-binding domain is found at 294-333; sequence DIDECRTSSYLCQYQCVNEPGKFSCMCPQGYQVVRSRTCQ. One can recognise an EGF-like 6; calcium-binding domain in the interval 334–378; that stretch reads DINECETTNECREDEMCWNYHGGFRCYPQNPCQDPYVLTSENRCV.

Belongs to the fibulin family. Interacts with ECM1. Interacts with TIMP3. Expressed by olfactory ensheathing cells (at protein level). Detected in lung, intestine and kidney.

The protein localises to the secreted. The protein resides in the extracellular space. Its subcellular location is the extracellular matrix. Functionally, binds EGFR, the EGF receptor, inducing EGFR autophosphorylation and the activation of downstream signaling pathways. May play a role in cell adhesion and migration. May function as a negative regulator of chondrocyte differentiation. In the olfactory epithelium, it may regulate glial cell migration, differentiation and the ability of glial cells to support neuronal neurite outgrowth. This chain is EGF-containing fibulin-like extracellular matrix protein 1 (Efemp1), found in Rattus norvegicus (Rat).